Reading from the N-terminus, the 357-residue chain is 4-hydroxy-2-oxovalerate aldolase (357 aa).

A disordered region spans residues 1–21 (MSQEAARDAAAGRPVQIHDPT). The Pyruvate carboxyltransferase domain maps to 15–265 (VQIHDPTLRD…RTGIDLYRLL (251 aa)). 23–24 (RD) contributes to the substrate binding site. Aspartate 24 is a binding site for Mn(2+). Catalysis depends on histidine 27, which acts as the Proton acceptor. Residues serine 177 and histidine 204 each contribute to the substrate site. Residues histidine 204 and histidine 206 each contribute to the Mn(2+) site.

This sequence belongs to the 4-hydroxy-2-oxovalerate aldolase family.

It carries out the reaction (S)-4-hydroxy-2-oxopentanoate = acetaldehyde + pyruvate. Involved in the biosynthesis of the peptidyl nucleoside antibiotic nikkomycin. This Streptomyces tendae protein is 4-hydroxy-2-oxovalerate aldolase.